We begin with the raw amino-acid sequence, 343 residues long: Probable 4-hydroxy-tetrahydrodipicolinate reductase 1, chloroplastic (343 aa).

A chloroplast-targeting transit peptide spans 1 to 14; that stretch reads MLASTFATHPAAAA. NAD(+)-binding positions include 167 to 169 and 190 to 193; these read GTT and SPQM. Histidine 226 acts as the Proton donor/acceptor in catalysis. Lysine 230 serves as the catalytic Proton donor. 235 to 236 contributes to the (S)-2,3,4,5-tetrahydrodipicolinate binding site; that stretch reads GT.

The protein belongs to the DapB family.

The protein resides in the plastid. The protein localises to the chloroplast. The catalysed reaction is (S)-2,3,4,5-tetrahydrodipicolinate + NAD(+) + H2O = (2S,4S)-4-hydroxy-2,3,4,5-tetrahydrodipicolinate + NADH + H(+). The enzyme catalyses (S)-2,3,4,5-tetrahydrodipicolinate + NADP(+) + H2O = (2S,4S)-4-hydroxy-2,3,4,5-tetrahydrodipicolinate + NADPH + H(+). The protein operates within amino-acid biosynthesis; L-lysine biosynthesis via DAP pathway; (S)-tetrahydrodipicolinate from L-aspartate: step 4/4. Its function is as follows. Catalyzes the conversion of 4-hydroxy-tetrahydrodipicolinate (HTPA) to tetrahydrodipicolinate. The protein is Probable 4-hydroxy-tetrahydrodipicolinate reductase 1, chloroplastic (DAPB1) of Oryza sativa subsp. japonica (Rice).